A 367-amino-acid chain; its full sequence is Glutamate 5-kinase (367 aa).

Lys17 contacts ATP. Positions 57, 144, and 156 each coordinate substrate. Residues 176–177 (SD) and 217–223 (TGGMVSK) contribute to the ATP site. The PUA domain maps to 279–357 (VGSLTLDEGA…SELPCELRRP (79 aa)).

Belongs to the glutamate 5-kinase family.

It is found in the cytoplasm. The catalysed reaction is L-glutamate + ATP = L-glutamyl 5-phosphate + ADP. It participates in amino-acid biosynthesis; L-proline biosynthesis; L-glutamate 5-semialdehyde from L-glutamate: step 1/2. Catalyzes the transfer of a phosphate group to glutamate to form L-glutamate 5-phosphate. The polypeptide is Glutamate 5-kinase (Mycobacterium leprae (strain Br4923)).